Reading from the N-terminus, the 190-residue chain is Potassium-transporting ATPase KdpC subunit (190 aa).

The helical transmembrane segment at 6–26 (PAVFLVLLLTLITGLLYPLLT) threads the bilayer. The segment at 67-88 (GRPSATSDRPYNPLASSGSNLA) is disordered. Residues 69-88 (PSATSDRPYNPLASSGSNLA) show a composition bias toward polar residues.

This sequence belongs to the KdpC family. As to quaternary structure, the system is composed of three essential subunits: KdpA, KdpB and KdpC.

Its subcellular location is the cell inner membrane. Functionally, part of the high-affinity ATP-driven potassium transport (or Kdp) system, which catalyzes the hydrolysis of ATP coupled with the electrogenic transport of potassium into the cytoplasm. This subunit acts as a catalytic chaperone that increases the ATP-binding affinity of the ATP-hydrolyzing subunit KdpB by the formation of a transient KdpB/KdpC/ATP ternary complex. This is Potassium-transporting ATPase KdpC subunit from Erwinia tasmaniensis (strain DSM 17950 / CFBP 7177 / CIP 109463 / NCPPB 4357 / Et1/99).